A 341-amino-acid chain; its full sequence is MKTLAKLHAEKGIWMTDVPHPDCGHNDVVIKISKTAICGTDMHIYQWDDWAQNTIPVPMTVGHEFVGVITEVGPEVSGFKIGDRVSGEGHITCGHCRNCRAGRRHLCRKTLGVGVNRTGAFAEYLVIPASNAFKIPNNISDDMAAIFDPFGNATHTALSFDLIGEDVLITGAGPIGAMAAAIAKHVGARNVVITDVNDFRLDLAKKMGATRTVNVSRESLKDVMTEIDMHEGFDVGLEMSGNDMAFRSMLECMNHGGKIAMLGIPGKDTLIDWNQVIFKGLIIKGIYGREMYETWYKMVAMLQSGLDISPIITHRFKVDEFQQGFDTMGSGLSGKVILDWN.

C38 contributes to the Zn(2+) binding site. Catalysis depends on charge relay system residues T40 and H43. Zn(2+) contacts are provided by H63, E64, C93, C96, C99, and C107. NAD(+) is bound by residues I175, D195, R200, 262–264 (LGI), and 286–287 (IY).

Belongs to the zinc-containing alcohol dehydrogenase family. As to quaternary structure, homotetramer. Zn(2+) is required as a cofactor.

The protein resides in the cytoplasm. The catalysed reaction is L-threonine + NAD(+) = (2S)-2-amino-3-oxobutanoate + NADH + H(+). It functions in the pathway amino-acid degradation; L-threonine degradation via oxydo-reductase pathway; glycine from L-threonine: step 1/2. Catalyzes the NAD(+)-dependent oxidation of L-threonine to 2-amino-3-ketobutyrate. The chain is L-threonine 3-dehydrogenase from Marinomonas sp. (strain MWYL1).